The sequence spans 127 residues: MVQIIKDTNEFKTFLTAAGHKLAVVQFSSKRCGPCKRMFPVFHAMSVKYQNVFFANVDVNNSPELAETCHIKTIPTFQMFKKSQKVTLFSRIKRIICCYRSGFMSNLIFEFCGADAKKLEAKTQELM.

In terms of domain architecture, Thioredoxin spans 1-92; sequence MVQIIKDTNE…SQKVTLFSRI (92 aa). C32 and C35 form a disulfide bridge.

The protein belongs to the thioredoxin family. Testis-specific. Only expressed during spermiogenesis, prominently in the Golgi apparatus of pachytene spermatocytes and round and elongated spermatids, with a transient localization in the developing acrosome of round spermatids (at protein level).

Its subcellular location is the cytoplasm. The protein resides in the golgi apparatus. Functionally, may be required for post-translational modifications of proteins required for acrosomal biogenesis. May act by reducing disulfide bonds within the sperm. This Homo sapiens (Human) protein is Thioredoxin domain-containing protein 8 (TXNDC8).